The chain runs to 322 residues: Tetraacyldisaccharide 4'-kinase (322 aa).

40-47 (CVGGTGKT) contacts ATP.

This sequence belongs to the LpxK family.

It catalyses the reaction a lipid A disaccharide + ATP = a lipid IVA + ADP + H(+). The protein operates within glycolipid biosynthesis; lipid IV(A) biosynthesis; lipid IV(A) from (3R)-3-hydroxytetradecanoyl-[acyl-carrier-protein] and UDP-N-acetyl-alpha-D-glucosamine: step 6/6. Transfers the gamma-phosphate of ATP to the 4'-position of a tetraacyldisaccharide 1-phosphate intermediate (termed DS-1-P) to form tetraacyldisaccharide 1,4'-bis-phosphate (lipid IVA). This is Tetraacyldisaccharide 4'-kinase from Koribacter versatilis (strain Ellin345).